Reading from the N-terminus, the 104-residue chain is Large ribosomal subunit protein uL23 (104 aa).

It belongs to the universal ribosomal protein uL23 family. In terms of assembly, part of the 50S ribosomal subunit. Contacts protein L29, and trigger factor when it is bound to the ribosome.

In terms of biological role, one of the early assembly proteins it binds 23S rRNA. One of the proteins that surrounds the polypeptide exit tunnel on the outside of the ribosome. Forms the main docking site for trigger factor binding to the ribosome. The sequence is that of Large ribosomal subunit protein uL23 from Rhodospirillum rubrum (strain ATCC 11170 / ATH 1.1.1 / DSM 467 / LMG 4362 / NCIMB 8255 / S1).